Reading from the N-terminus, the 471-residue chain is Glutamate--tRNA ligase (471 aa).

Residues 9–19 (PSPTGYLHVGG) carry the 'HIGH' region motif. Residues Cys-98, Cys-100, Cys-125, and His-127 each contribute to the Zn(2+) site. The 'KMSKS' region signature appears at 237 to 241 (KLSKR). ATP is bound at residue Lys-240.

It belongs to the class-I aminoacyl-tRNA synthetase family. Glutamate--tRNA ligase type 1 subfamily. As to quaternary structure, monomer. Zn(2+) serves as cofactor.

Its subcellular location is the cytoplasm. The catalysed reaction is tRNA(Glu) + L-glutamate + ATP = L-glutamyl-tRNA(Glu) + AMP + diphosphate. Catalyzes the attachment of glutamate to tRNA(Glu) in a two-step reaction: glutamate is first activated by ATP to form Glu-AMP and then transferred to the acceptor end of tRNA(Glu). This is Glutamate--tRNA ligase from Shigella flexneri.